The chain runs to 214 residues: Large ribosomal subunit protein uL3 (214 aa).

The disordered stretch occupies residues 133–154 (GLGAGHGTQRKHRSPGSIGGCA).

It belongs to the universal ribosomal protein uL3 family. In terms of assembly, part of the 50S ribosomal subunit. Forms a cluster with proteins L14 and L19.

In terms of biological role, one of the primary rRNA binding proteins, it binds directly near the 3'-end of the 23S rRNA, where it nucleates assembly of the 50S subunit. The chain is Large ribosomal subunit protein uL3 from Streptomyces avermitilis (strain ATCC 31267 / DSM 46492 / JCM 5070 / NBRC 14893 / NCIMB 12804 / NRRL 8165 / MA-4680).